A 114-amino-acid chain; its full sequence is Protein 4 (114 aa).

The polypeptide is Protein 4 (4) (Hordeum vulgare (Barley)).